A 126-amino-acid polypeptide reads, in one-letter code: Aspartate 1-decarboxylase (126 aa).

Catalysis depends on S25, which acts as the Schiff-base intermediate with substrate; via pyruvic acid. S25 is modified (pyruvic acid (Ser)). Substrate is bound at residue T57. Y58 functions as the Proton donor in the catalytic mechanism. Residue G73–A75 participates in substrate binding.

It belongs to the PanD family. As to quaternary structure, heterooctamer of four alpha and four beta subunits. It depends on pyruvate as a cofactor. Is synthesized initially as an inactive proenzyme, which is activated by self-cleavage at a specific serine bond to produce a beta-subunit with a hydroxyl group at its C-terminus and an alpha-subunit with a pyruvoyl group at its N-terminus.

It is found in the cytoplasm. The catalysed reaction is L-aspartate + H(+) = beta-alanine + CO2. The protein operates within cofactor biosynthesis; (R)-pantothenate biosynthesis; beta-alanine from L-aspartate: step 1/1. Catalyzes the pyruvoyl-dependent decarboxylation of aspartate to produce beta-alanine. In Salmonella arizonae (strain ATCC BAA-731 / CDC346-86 / RSK2980), this protein is Aspartate 1-decarboxylase.